Here is a 344-residue protein sequence, read N- to C-terminus: N-acetyl-gamma-glutamyl-phosphate reductase (344 aa).

Residue Cys-150 is part of the active site.

This sequence belongs to the NAGSA dehydrogenase family. Type 1 subfamily.

It localises to the cytoplasm. The catalysed reaction is N-acetyl-L-glutamate 5-semialdehyde + phosphate + NADP(+) = N-acetyl-L-glutamyl 5-phosphate + NADPH + H(+). Its pathway is amino-acid biosynthesis; L-arginine biosynthesis; N(2)-acetyl-L-ornithine from L-glutamate: step 3/4. In terms of biological role, catalyzes the NADPH-dependent reduction of N-acetyl-5-glutamyl phosphate to yield N-acetyl-L-glutamate 5-semialdehyde. The protein is N-acetyl-gamma-glutamyl-phosphate reductase of Pseudomonas paraeruginosa (strain DSM 24068 / PA7) (Pseudomonas aeruginosa (strain PA7)).